A 194-amino-acid polypeptide reads, in one-letter code: dCTP deaminase (194 aa).

DCTP is bound by residues 110 to 115, Asp-128, 136 to 138, Tyr-171, Lys-178, and Gln-182; these read RSSLAR and VLE. Glu-138 acts as the Proton donor/acceptor in catalysis. The interval 172 to 194 is disordered; sequence NKRKSAKYRDQQEAVASRISQDK.

The protein belongs to the dCTP deaminase family. As to quaternary structure, homotrimer.

The catalysed reaction is dCTP + H2O + H(+) = dUTP + NH4(+). It participates in pyrimidine metabolism; dUMP biosynthesis; dUMP from dCTP (dUTP route): step 1/2. Catalyzes the deamination of dCTP to dUTP. This Shewanella loihica (strain ATCC BAA-1088 / PV-4) protein is dCTP deaminase.